Reading from the N-terminus, the 370-residue chain is 3-isopropylmalate dehydrogenase (370 aa).

77–90 (GPKWDSVPYEVRPE) is an NAD(+) binding site. Positions 97, 107, 135, and 226 each coordinate substrate. Mg(2+) is bound by residues aspartate 226, aspartate 250, and aspartate 254. Position 290–302 (290–302 (GSAPDIAGKGIAN)) interacts with NAD(+).

It belongs to the isocitrate and isopropylmalate dehydrogenases family. LeuB type 1 subfamily. Homodimer. Mg(2+) is required as a cofactor. Mn(2+) serves as cofactor.

The protein resides in the cytoplasm. It catalyses the reaction (2R,3S)-3-isopropylmalate + NAD(+) = 4-methyl-2-oxopentanoate + CO2 + NADH. Its pathway is amino-acid biosynthesis; L-leucine biosynthesis; L-leucine from 3-methyl-2-oxobutanoate: step 3/4. Functionally, catalyzes the oxidation of 3-carboxy-2-hydroxy-4-methylpentanoate (3-isopropylmalate) to 3-carboxy-4-methyl-2-oxopentanoate. The product decarboxylates to 4-methyl-2 oxopentanoate. The protein is 3-isopropylmalate dehydrogenase of Brucella suis biovar 1 (strain 1330).